The primary structure comprises 370 residues: Homospermidine synthase 2 (370 aa).

The protein belongs to the deoxyhypusine synthase family. Homotetramer. It depends on NAD(+) as a cofactor. Post-translationally, the N-terminus is blocked. As to expression, expressed in roots.

The enzyme catalyses putrescine + spermidine = sym-homospermidine + propane-1,3-diamine. Its pathway is alkaloid biosynthesis; pyrrolizidine alkaloid biosynthesis. Its function is as follows. Catalyzes the transfer of an aminobutyl unit from spermidine onto putrescine. The resulting polyamine homospermidine is a precursor in the biosynthesis of pyrrolizidine alkaloids. The sequence is that of Homospermidine synthase 2 from Senecio vernalis (Spring groundsel).